Consider the following 470-residue polypeptide: Leucine-rich repeat extensin-like protein 6 (470 aa).

A signal peptide spans 1–28; sequence MREDTFFFQWWFLVSGLSFIFLLPQAFT. The N-linked (GlcNAc...) asparagine glycan is linked to Asn83. LRR repeat units lie at residues 98-122, 123-146, 147-170, 171-194, 196-217, 219-241, 243-265, 266-290, 291-314, and 316-337; these read VLTV…LGLL, TDLA…LKCL, HLLH…IFSL, PSLK…LFDL, LDAL…IGNS, VSVL…FYKM, KTLH…EIGL, LNQL…IGDM, KSLE…ICRL, and RLEN…CLRL. Asn319 carries an N-linked (GlcNAc...) asparagine glycan. A disordered region spans residues 378–411; it reads SPPPPPPPPPPPPPPPPPPPPPPPPPPPPPYVYP. A contains the Ser-Pro(4) repeats region spans residues 378–470; that stretch reads SPPPPPPPPP…CNDLPTPVHY (93 aa).

Post-translationally, hydroxylated on proline residues in the S-P-P-P-P repeat. In terms of processing, O-glycosylated on hydroxyprolines. In terms of tissue distribution, expressed in roots.

It is found in the secreted. It localises to the cell wall. In terms of biological role, modulates cell morphogenesis by regulating cell wall formation and assembly, and/or growth polarization. In Arabidopsis thaliana (Mouse-ear cress), this protein is Leucine-rich repeat extensin-like protein 6 (LRX6).